Reading from the N-terminus, the 88-residue chain is Small ribosomal subunit protein bS20 (88 aa).

Disordered regions lie at residues Met-1 to Lys-25 and His-68 to Ala-88.

The protein belongs to the bacterial ribosomal protein bS20 family.

Functionally, binds directly to 16S ribosomal RNA. The protein is Small ribosomal subunit protein bS20 of Cutibacterium acnes (strain DSM 16379 / KPA171202) (Propionibacterium acnes).